The following is a 149-amino-acid chain: Transcriptional repressor NrdR (149 aa).

Residues 3–34 (CPFCTAVDTKVIDSRLVGDGSQVRRRRQCLVC) fold into a zinc finger. The region spanning 49–139 (PRVVKSDEIR…VYRSFEDVRD (91 aa)) is the ATP-cone domain.

The protein belongs to the NrdR family. Requires Zn(2+) as cofactor.

In terms of biological role, negatively regulates transcription of bacterial ribonucleotide reductase nrd genes and operons by binding to NrdR-boxes. The sequence is that of Transcriptional repressor NrdR from Proteus mirabilis (strain HI4320).